A 665-amino-acid polypeptide reads, in one-letter code: Probable potassium transport system protein Kup (665 aa).

Transmembrane regions (helical) follow at residues 15–35 (SFLI…LYVM), 48–68 (ITPD…TLLT), 100–120 (WLII…MLTP), 147–167 (IIII…HFGT), 173–193 (IFGP…IVNL), 219–239 (LGFF…ALYS), 251–271 (LTWP…AAWI), 292–312 (MMPS…AIIA), 348–368 (IYMP…VLYF), 378–398 (YGLS…NYLL), 403–423 (PLPI…SFLI), and 431–451 (KGGF…YIWI).

The protein belongs to the HAK/KUP transporter (TC 2.A.72) family.

The protein localises to the cell membrane. The catalysed reaction is K(+)(in) + H(+)(in) = K(+)(out) + H(+)(out). In terms of biological role, transport of potassium into the cell. Likely operates as a K(+):H(+) symporter. The protein is Probable potassium transport system protein Kup of Clostridium perfringens (strain ATCC 13124 / DSM 756 / JCM 1290 / NCIMB 6125 / NCTC 8237 / Type A).